The following is a 200-amino-acid chain: Probable molybdenum cofactor guanylyltransferase (200 aa).

GTP is bound by residues 9 to 11, K21, D69, and D100; that span reads LAG. D100 is a Mg(2+) binding site.

Belongs to the MobA family. Requires Mg(2+) as cofactor.

The protein localises to the cytoplasm. The enzyme catalyses Mo-molybdopterin + GTP + H(+) = Mo-molybdopterin guanine dinucleotide + diphosphate. In terms of biological role, transfers a GMP moiety from GTP to Mo-molybdopterin (Mo-MPT) cofactor (Moco or molybdenum cofactor) to form Mo-molybdopterin guanine dinucleotide (Mo-MGD) cofactor. This chain is Probable molybdenum cofactor guanylyltransferase, found in Bacillus cereus (strain ZK / E33L).